The chain runs to 350 residues: N-acetyl-gamma-glutamyl-phosphate reductase (350 aa).

Cys-154 is an active-site residue.

It belongs to the NAGSA dehydrogenase family. Type 1 subfamily.

The protein resides in the cytoplasm. It catalyses the reaction N-acetyl-L-glutamate 5-semialdehyde + phosphate + NADP(+) = N-acetyl-L-glutamyl 5-phosphate + NADPH + H(+). It participates in amino-acid biosynthesis; L-arginine biosynthesis; N(2)-acetyl-L-ornithine from L-glutamate: step 3/4. Catalyzes the NADPH-dependent reduction of N-acetyl-5-glutamyl phosphate to yield N-acetyl-L-glutamate 5-semialdehyde. The protein is N-acetyl-gamma-glutamyl-phosphate reductase of Corynebacterium efficiens (strain DSM 44549 / YS-314 / AJ 12310 / JCM 11189 / NBRC 100395).